We begin with the raw amino-acid sequence, 441 residues long: Tubulin alpha chain (441 aa).

Gln11, Glu68, Ser137, Gly141, Thr142, Thr176, Asn203, and Asn224 together coordinate GTP. Mg(2+) is bound at residue Glu68. The active site involves Glu250.

Belongs to the tubulin family. In terms of assembly, dimer of alpha and beta chains. A typical microtubule is a hollow water-filled tube with an outer diameter of 25 nm and an inner diameter of 15 nM. Alpha-beta heterodimers associate head-to-tail to form protofilaments running lengthwise along the microtubule wall with the beta-tubulin subunit facing the microtubule plus end conferring a structural polarity. Microtubules usually have 13 protofilaments but different protofilament numbers can be found in some organisms and specialized cells. It depends on Mg(2+) as a cofactor.

It localises to the cytoplasm. The protein localises to the cytoskeleton. The enzyme catalyses GTP + H2O = GDP + phosphate + H(+). Its function is as follows. Tubulin is the major constituent of microtubules, a cylinder consisting of laterally associated linear protofilaments composed of alpha- and beta-tubulin heterodimers. Microtubules grow by the addition of GTP-tubulin dimers to the microtubule end, where a stabilizing cap forms. Below the cap, tubulin dimers are in GDP-bound state, owing to GTPase activity of alpha-tubulin. The polypeptide is Tubulin alpha chain (TUB1) (Encephalitozoon cuniculi (strain GB-M1) (Microsporidian parasite)).